A 547-amino-acid polypeptide reads, in one-letter code: GMP synthase [glutamine-hydrolyzing] (547 aa).

In terms of domain architecture, Glutamine amidotransferase type-1 spans 12-210 (KILILDFGSQ…VLDIAGAKPD (199 aa)). C89 (nucleophile) is an active-site residue. Residues H184 and E186 contribute to the active site. Residues 211–403 (WIMRDHIEEA…LGLPAEMVYR (193 aa)) enclose the GMPS ATP-PPase domain. 238 to 244 (SGGVDSS) contacts ATP.

As to quaternary structure, homodimer.

It carries out the reaction XMP + L-glutamine + ATP + H2O = GMP + L-glutamate + AMP + diphosphate + 2 H(+). The protein operates within purine metabolism; GMP biosynthesis; GMP from XMP (L-Gln route): step 1/1. In terms of biological role, catalyzes the synthesis of GMP from XMP. This Burkholderia pseudomallei (strain 1710b) protein is GMP synthase [glutamine-hydrolyzing].